Here is a 176-residue protein sequence, read N- to C-terminus: Ribosome maturation factor RimM (176 aa).

One can recognise a PRC barrel domain in the interval 96–176 (PEDEFYWRDL…QILVDWDPDF (81 aa)).

Belongs to the RimM family. As to quaternary structure, binds ribosomal protein uS19.

Its subcellular location is the cytoplasm. Functionally, an accessory protein needed during the final step in the assembly of 30S ribosomal subunit, possibly for assembly of the head region. Essential for efficient processing of 16S rRNA. May be needed both before and after RbfA during the maturation of 16S rRNA. It has affinity for free ribosomal 30S subunits but not for 70S ribosomes. This is Ribosome maturation factor RimM from Shewanella piezotolerans (strain WP3 / JCM 13877).